Consider the following 541-residue polypeptide: NEDD8-activating enzyme E1 regulatory subunit (541 aa).

It belongs to the ubiquitin-activating E1 family. ULA1 subfamily. In terms of assembly, heterodimer of uba-3 and ula-1. The complex binds NEDD8 and ubc-12.

Its pathway is protein modification; protein neddylation. Its function is as follows. Regulatory subunit of the dimeric uba-3-ula-1 E1 enzyme. E1 activates NEDD8 by first adenylating its C-terminal glycine residue with ATP, thereafter linking this residue to the side chain of the catalytic cysteine, yielding a NEDD8-rfl-1 (uba-3) thioester and free AMP. E1 finally transfers NEDD8 to the catalytic cysteine of ubc-12. Required for rfl-1 (uba-3) nuclear localization during early embryonic development. The sequence is that of NEDD8-activating enzyme E1 regulatory subunit (ula-1) from Caenorhabditis elegans.